The primary structure comprises 85 residues: Sec-independent protein translocase protein TatA (85 aa).

The chain crosses the membrane as a helical span at residues 1–21 (MGSFSIWHWLIVLVIIMMVFG). Residues 39 to 51 (FKDGMREGQEDKP) are compositionally biased toward basic and acidic residues. The disordered stretch occupies residues 39–85 (FKDGMREGQEDKPAGSQQPQQTAGQPPRELHDATTIDVEARDKSKQG). A compositionally biased stretch (polar residues) spans 53–62 (GSQQPQQTAG). Over residues 66-85 (RELHDATTIDVEARDKSKQG) the composition is skewed to basic and acidic residues.

The protein belongs to the TatA/E family. In terms of assembly, the Tat system comprises two distinct complexes: a TatABC complex, containing multiple copies of TatA, TatB and TatC subunits, and a separate TatA complex, containing only TatA subunits. Substrates initially bind to the TatABC complex, which probably triggers association of the separate TatA complex to form the active translocon.

The protein resides in the cell inner membrane. Functionally, part of the twin-arginine translocation (Tat) system that transports large folded proteins containing a characteristic twin-arginine motif in their signal peptide across membranes. TatA could form the protein-conducting channel of the Tat system. The protein is Sec-independent protein translocase protein TatA of Ralstonia pickettii (strain 12J).